Consider the following 306-residue polypeptide: Reaction center protein M chain (306 aa).

A run of 3 helical transmembrane segments spans residues 53 to 79, 111 to 140, and 143 to 168; these read GTTGVLSLVFGFFAIEIIGFNLLASVN, GGWWQIAGFFLTTSILLWWVRMYRRARALK, and THTAWAFASAIFLFLSLGFIRPLLMG. (7R,8Z)-bacteriochlorophyll b is bound by residues His-181 and His-201. The helical transmembrane segment at 198–226 threads the bilayer; sequence NPFHMLSIAFLYGSALLSAMHGATILAVS. The Fe cation site is built by His-218 and Glu-233. A ubiquinone is bound at residue Trp-251. Residues 260–286 form a helical membrane-spanning segment; sequence TMESIHRWAWWFAVLCTFTGAIGILLT. A Fe cation-binding site is contributed by His-265.

The protein belongs to the reaction center PufL/M/PsbA/D family. In terms of assembly, reaction center is composed of four bacteriochlorophylls, two bacteriopheophytins, two ubiquinones, one iron, and three highly hydrophobic polypeptide chains (designated L, M, and H).

Its subcellular location is the cellular chromatophore membrane. Functionally, the reaction center is a membrane-bound complex that mediates the initial photochemical event in the electron transfer process of photosynthesis. This is Reaction center protein M chain (pufM) from Rhodospirillum rubrum.